Consider the following 255-residue polypeptide: MLQISHLYADYGGKPALEDINLTLESGELLVVLGPSGCGKTTLLNLIAGFVPYQHGSIQLAGKRIEGPGAERGVVFQNEGLLPWRNVQDNVAFGLQLAGIEKMQRLEIAHQMLKKVGLEGAEKRYIWQLSGGQRQRVGIARALAANPQLLLLDEPFGALDAFTRDQMQTLLLKLWQETGKQVLLITHDIEEAVFMATELVLLSSGPGRVLERLPLNFARRFVAGESSRSIKSDPQFIAMREYVLSRVFEQREAFS.

An ABC transporter domain is found at 2–229; the sequence is LQISHLYADY…RFVAGESSRS (228 aa). 34-41 provides a ligand contact to ATP; it reads GPSGCGKT.

It belongs to the ABC transporter superfamily. Taurine importer (TC 3.A.1.17.1) family. In terms of assembly, the complex is composed of two ATP-binding proteins (TauB), two transmembrane proteins (TauC) and a solute-binding protein (TauA).

It localises to the cell inner membrane. The enzyme catalyses taurine(out) + ATP + H2O = taurine(in) + ADP + phosphate + H(+). Part of the ABC transporter complex TauABC involved in taurine import. Responsible for energy coupling to the transport system. The protein is Taurine import ATP-binding protein TauB of Escherichia coli (strain K12).